Consider the following 177-residue polypeptide: Novel acetylcholine receptor chaperone (177 aa).

Topologically, residues 1–5 (MASPR) are cytoplasmic. The helical transmembrane segment at 6-26 (TVTVVALSVALGLFFVFMGTI) threads the bilayer. Topologically, residues 27 to 61 (KLTPRLSKDAYSEMKRAYKSYVRALPLLKKMGINS) are lumenal. The interval 43 to 54 (AYKSYVRALPLL) is interaction with NGFR. A helical transmembrane segment spans residues 62 to 82 (ILLRKSIGALEVACGIVMTLV). The Cytoplasmic portion of the chain corresponds to 83–88 (PGRPKD). A helical membrane pass occupies residues 89-109 (VANFFLLLLVLAVLFFHQLVG). The Lumenal portion of the chain corresponds to 110-114 (DPLKR). A helical membrane pass occupies residues 115–132 (YAHALVFGILLTCRLLIA). Residues 133 to 177 (RKPEDRSSEKKSSPPGNAGSDGNAGNTEEQPSLYEKAPQGKMKLS) lie on the Cytoplasmic side of the membrane. Positions 136–177 (EDRSSEKKSSPPGNAGSDGNAGNTEEQPSLYEKAPQGKMKLS) are disordered.

The protein belongs to the DoxX family. In terms of assembly, may interact with NGFR. Interacts with RPN1, RPN2 and CANX.

It is found in the peroxisome membrane. Its subcellular location is the cytoplasmic vesicle. It localises to the endoplasmic reticulum membrane. In terms of biological role, molecular chaperone which mediates the proper assembly and functional expression of the nicotinic acetylcholine receptors (nAChRs) throughout the brain. Essential for the proper folding, assembly, function and surface trafficking of alpha-7 (CHRNA7), alpha-4-beta-2, alpha-3-beta-2 and alpha-3-beta-4 receptors. Stably associates with ribophorin-1 (RPN1) and ribophorin-2 (RPN2) (components of the oligosaccharyl transferase (OST) complex) and with calnexin (CANX), both of which are critical for NACHO-mediated effects on CHRNA7 assembly and function. Facilitates the proper folding and assembly of alpha-6-beta-2 and alpha-6-beta-2-beta-3 receptors and acts at early stages of the nAChRs subunit assembly. Promotes the expression of the alpha-4(2):beta-2(3) stoichiometric form over the alpha-4(3):beta-2(2) form. The sequence is that of Novel acetylcholine receptor chaperone (TMEM35A) from Bos taurus (Bovine).